A 152-amino-acid polypeptide reads, in one-letter code: Leptin (152 aa).

Residues 1-26 (MDHILALVLALLPLSLCVALPGALDA) form the signal peptide. A disulfide bridge connects residues C109 and C152.

The protein belongs to the leptin family. As to expression, expressed mostly in the liver.

Its subcellular location is the secreted. Its function is as follows. May function as part of a signaling pathway that acts to regulate the size of the body fat depot. This chain is Leptin (lep), found in Takifugu rubripes (Japanese pufferfish).